The chain runs to 1843 residues: Xin actin-binding repeat-containing protein 1 (1843 aa).

The span at 1–10 shows a compositional bias: polar residues; that stretch reads MADTQTQVAP. The interval 1–48 is disordered; it reads MADTQTQVAPTPTMRMATAEDLPLPPPPALEDLPLPPPKESFSKFHQQ. Residues 1 to 54 are interaction with VASP; the sequence is MADTQTQVAPTPTMRMATAEDLPLPPPPALEDLPLPPPKESFSKFHQQRQASEL. Pro residues predominate over residues 23-39; that stretch reads PLPPPPALEDLPLPPPK. 4 Xin repeats span residues 89-104, 121-136, 151-166, and 186-201; these read GDVQ…WRLD, GDVQ…GSFA, GDVR…KPLD, and GDVQ…RPLD. The disordered stretch occupies residues 132–151; sequence EGSFANSTDQEPTRPQPGGG. Phosphoserine occurs at positions 205, 208, and 213. 2 Xin repeats span residues 226–241 and 264–279; these read GDVK…EPLC and NAVR…RPLD. Ser295 carries the phosphoserine modification. One copy of the Xin 7 repeat lies at 302–317; sequence PDVSATRWIFETQPLD. Ser332 is subject to Phosphoserine. Xin repeat units follow at residues 340 to 355 and 376 to 391; these read PDVQ…RALD and GDVR…KPLD. The segment at 406 to 432 is disordered; the sequence is DPQDGEGHLSSDSSSALPFSQSAPQRD. The segment covering 415-429 has biased composition (low complexity); the sequence is SSDSSSALPFSQSAP. One copy of the Xin 10 repeat lies at 436-451; sequence GDVKTFKNLFETLPLD. The disordered stretch occupies residues 455–479; sequence QGEVLAHGSPSREEGTDSAGQAQGI. Xin repeat units follow at residues 507-522 and 545-560; these read GDVQ…QPLD and GDVG…QPLE. An interaction with CTNNB1 region spans residues 531-632; that stretch reads IDVVRGITRQ…AQSCTWMFKP (102 aa). The span at 564–577 shows a compositional bias: basic and acidic residues; sequence QREQQERQKEEGKS. Positions 564 to 591 are disordered; that stretch reads QREQQERQKEEGKSQGDPQPEAPPKGDV. Xin repeat units follow at residues 589–604, 621–636, 654–669, 691–706, and 723–738; these read GDVQ…CPMS, AEAQ…QPVD, GERQ…EPLQ, GQVS…LEAG, and GSVH…CPMG. Disordered stretches follow at residues 943 to 999, 1063 to 1205, 1238 to 1277, 1289 to 1471, and 1561 to 1696; these read SLRW…QAIG, AEAQ…MAWG, SGPQ…HRAE, DPLL…QKEL, and MSSL…DVSV. Polar residues-rich tracts occupy residues 1064 to 1073 and 1080 to 1089; these read EAQSLHQQVL and PTPTATSNPI. Positions 1294–1311 are enriched in polar residues; the sequence is SHSSPAGQRTPGGSQTKT. Over residues 1357–1368 the composition is skewed to basic and acidic residues; sequence GQREHQRGERDT. Polar residues predominate over residues 1393-1424; it reads GHSQPSLQHGLSTTAPRPTKNQATGSNAQSSE. Positions 1462–1490 form a coiled coil; it reads DSLQRNQKELQGLLNQVQALEKEAASSVD. Composition is skewed to polar residues over residues 1588-1600 and 1663-1679; these read VTVS…SGSG and SRDS…QSAT. The tract at residues 1685–1843 is interaction with FLNC; sequence TPSFKGNPDV…SCSYSQPAAQ (159 aa).

This sequence belongs to the Xin family. As to quaternary structure, interacts (via N-terminus) with CTTN; the interaction promotes CTTN localization to intercalated disks in cardiomyocytes. Interacts with CTNNB1. Interacts with FLNC and VASP. Interacts with F-actin. In terms of tissue distribution, expressed in skeletal muscle at areas of Z-disk disruption in a longitudinal pattern spanning one or more sarcomeres (at protein level). As to expression, expressed in the heart (at protein level). Expressed in the heart.

The protein resides in the cell junction. It is found in the adherens junction. The protein localises to the desmosome. Its function is as follows. Protects actin filaments from depolymerization. Required for correct cardiac intercalated disk ultrastructure via maintenance of cell-cell adhesion stability, and as a result maintains cardiac organ morphology, conductance and heart beat rhythm. Required for development of normal skeletal muscle morphology and muscle fiber type composition. Plays a role in regulating muscle satellite cell activation and survival, as a result promotes muscle fiber recovery from injury and fatigue. The protein is Xin actin-binding repeat-containing protein 1 of Homo sapiens (Human).